Reading from the N-terminus, the 1111-residue chain is Probable arabinosyltransferase A (1111 aa).

The next 13 helical transmembrane spans lie at 12 to 34 (IIRLIAVGAGITGLLLCAVVPLL), 205 to 224 (IAVGVGAAAVLIAILALSAL), 333 to 355 (VWMRIPATLAGIACWLIINHWVL), 370 to 387 (VAVLTAGAMFLAAWLPFN), 394 to 413 (PLIALGVLFTWVLVERAIAL), 423 to 445 (AVVAILTATLAPQGLIAIAALLT), 462 to 484 (GLLAPLLVLAASLSLITLVVFHS), 530 to 547 (FPVLVLLLCMFGVLVVLL), 554 to 576 (GLASGPTWRLIGTTATSLLLLTF), 581 to 603 (WAIQFGALAGLTGTFGAIAAFAF), 615 to 637 (TVYITALLFVLAWATAGINGWFG), 652 to 674 (IAGHPVTSIFLTLSILTGLLAGG), and 695 to 717 (FLATTPLVVVATTMVLCEVGSLA). The interval 804–831 (GLVNSDASPNKPNVTFSDSAGTAGGKGP) is disordered. Polar residues predominate over residues 808-823 (SDASPNKPNVTFSDSA).

The protein belongs to the emb family.

Its subcellular location is the cell membrane. In terms of biological role, arabinosyl transferase responsible for the polymerization of arabinose into the arabinan of arabinogalactan. This chain is Probable arabinosyltransferase A (embA), found in Mycobacterium leprae (strain TN).